A 78-amino-acid polypeptide reads, in one-letter code: Disintegrin DisBa-01 (78 aa).

Residues 1–78 (GNELLEAGEE…AGCPRNPFHA (78 aa)) enclose the Disintegrin domain. Disulfide bonds link Cys-11–Cys-26, Cys-13–Cys-21, Cys-20–Cys-43, Cys-34–Cys-40, Cys-39–Cys-64, and Cys-52–Cys-71. The Cell attachment site motif lies at 56 to 58 (RGD).

Belongs to the venom metalloproteinase (M12B) family. P-II subfamily. P-IIa sub-subfamily. In terms of assembly, monomer. In terms of tissue distribution, expressed by the venom gland.

The protein localises to the secreted. Its function is as follows. This recombinant disintegrin antagonizes integrins alpha-IIb/beta-3 (ITGA2B/ITGB3) and alpha-V/beta-3 (ITGAV/ITGB3). On ITGA2B/ITGB3, it interferes with the outside/-in phosphorylation of the focal adhesion kinase (PTK2 / FAK) downstream of the integrin. It strongly inhibits platelet aggregation induced by ADP, thrombin, and collagen, abolishes and reverses dynamic platelet recruitment to immobilized fibrinogen. In vivo, it induces a dramatic increase in the tail bleeding time, and has a strong antithrombotic activity. On ITGAV/ITGB3, it inhibits the adhesion of ITGAV/ITGB3-expressing human microvascular endothelial cell line and murine melanoma cell line to vitronectin (IC(50) are 555 nM and 225 nM, respectively), and transiently inhibits their proliferation without direct cell toxicity. In vivo, it potently inhibits angiogenesis and metastasis, probably due to its capability to strongly inhibit the expression of VEGF and its receptors in endothelial cells. It also inhibits tumor cell migration in vitro. The polypeptide is Disintegrin DisBa-01 (Bothrops alternatus (Urutu)).